We begin with the raw amino-acid sequence, 226 residues long: Enolase-phosphatase E1 (226 aa).

This sequence belongs to the HAD-like hydrolase superfamily. MasA/MtnC family. As to quaternary structure, monomer. Mg(2+) serves as cofactor.

It carries out the reaction 5-methylsulfanyl-2,3-dioxopentyl phosphate + H2O = 1,2-dihydroxy-5-(methylsulfanyl)pent-1-en-3-one + phosphate. It participates in amino-acid biosynthesis; L-methionine biosynthesis via salvage pathway; L-methionine from S-methyl-5-thio-alpha-D-ribose 1-phosphate: step 3/6. The protein operates within amino-acid biosynthesis; L-methionine biosynthesis via salvage pathway; L-methionine from S-methyl-5-thio-alpha-D-ribose 1-phosphate: step 4/6. In terms of biological role, bifunctional enzyme that catalyzes the enolization of 2,3-diketo-5-methylthiopentyl-1-phosphate (DK-MTP-1-P) into the intermediate 2-hydroxy-3-keto-5-methylthiopentenyl-1-phosphate (HK-MTPenyl-1-P), which is then dephosphorylated to form the acireductone 1,2-dihydroxy-3-keto-5-methylthiopentene (DHK-MTPene). This Shewanella oneidensis (strain ATCC 700550 / JCM 31522 / CIP 106686 / LMG 19005 / NCIMB 14063 / MR-1) protein is Enolase-phosphatase E1.